The chain runs to 103 residues: uncharacterized protein (103 aa).

This is an uncharacterized protein from Shigella flexneri.